The following is a 222-amino-acid chain: Octanoyltransferase (222 aa).

The region spanning 35–210 (ETTPDELWLV…EFVHLLGYPK (176 aa)) is the BPL/LPL catalytic domain. Substrate is bound by residues 74 to 81 (RGGQVTYH), 141 to 143 (SLG), and 154 to 156 (GLA). Residue cysteine 172 is the Acyl-thioester intermediate of the active site.

Belongs to the LipB family.

The protein resides in the cytoplasm. The enzyme catalyses octanoyl-[ACP] + L-lysyl-[protein] = N(6)-octanoyl-L-lysyl-[protein] + holo-[ACP] + H(+). Its pathway is protein modification; protein lipoylation via endogenous pathway; protein N(6)-(lipoyl)lysine from octanoyl-[acyl-carrier-protein]: step 1/2. Catalyzes the transfer of endogenously produced octanoic acid from octanoyl-acyl-carrier-protein onto the lipoyl domains of lipoate-dependent enzymes. Lipoyl-ACP can also act as a substrate although octanoyl-ACP is likely to be the physiological substrate. In Serratia proteamaculans (strain 568), this protein is Octanoyltransferase.